Reading from the N-terminus, the 393-residue chain is S-adenosylmethionine synthase (393 aa).

Histidine 16 provides a ligand contact to ATP. Aspartate 18 is a Mg(2+) binding site. Residue glutamate 44 participates in K(+) binding. L-methionine is bound by residues glutamate 57 and glutamine 100. The flexible loop stretch occupies residues 100–110 (QSNDIAQGVDH). ATP-binding positions include 167–169 (DAK), 238–239 (RF), aspartate 247, 253–254 (RK), alanine 270, and lysine 274. Aspartate 247 contributes to the L-methionine binding site. L-methionine is bound at residue lysine 278.

This sequence belongs to the AdoMet synthase family. Homotetramer; dimer of dimers. Mg(2+) serves as cofactor. The cofactor is K(+).

Its subcellular location is the cytoplasm. It carries out the reaction L-methionine + ATP + H2O = S-adenosyl-L-methionine + phosphate + diphosphate. It functions in the pathway amino-acid biosynthesis; S-adenosyl-L-methionine biosynthesis; S-adenosyl-L-methionine from L-methionine: step 1/1. In terms of biological role, catalyzes the formation of S-adenosylmethionine (AdoMet) from methionine and ATP. The overall synthetic reaction is composed of two sequential steps, AdoMet formation and the subsequent tripolyphosphate hydrolysis which occurs prior to release of AdoMet from the enzyme. This is S-adenosylmethionine synthase from Polaromonas sp. (strain JS666 / ATCC BAA-500).